The sequence spans 503 residues: Zinc metalloproteinase nas-14 (503 aa).

An N-terminal signal peptide occupies residues 1–25 (MRLLYSLFHCSAFLVGFTLSVGVLP). A Peptidase M12A domain is found at 116-312 (NLVTYPDKLW…KKVNKLYQCG (197 aa)). Intrachain disulfides connect Cys158/Cys311 and Cys182/Cys202. A glycan (N-linked (GlcNAc...) asparagine) is linked at Asn192. His210 contacts Zn(2+). Glu211 is a catalytic residue. 2 residues coordinate Zn(2+): His214 and His220. Over residues 317–340 (TSSTTTTTTTTTTTTTTEEPTTTT) the composition is skewed to low complexity. The tract at residues 317–377 (TSSTTTTTTT…TPKPVERSRN (61 aa)) is disordered. The segment covering 342 to 351 (VEEKPKDKKV) has biased composition (basic and acidic residues). Residues 352–370 (SSTTTTTKKPTTTTTTTPK) are compositionally biased toward low complexity. Disulfide bonds link Cys380–Cys414, Cys387–Cys407, and Cys396–Cys411. In terms of domain architecture, ShKT 1 spans 380-414 (CEDLNAHCGMWEQLGHCQHSVKYMAHYCRKACNLC). Residues 422–464 (TTTTPKPVPRNKEKENKSASSTTRGTSTATSTTPKTTTTTTSA) are disordered. Asn437 is a glycosylation site (N-linked (GlcNAc...) asparagine). Over residues 439–464 (SASSTTRGTSTATSTTPKTTTTTTSA) the composition is skewed to low complexity. 3 disulfide bridges follow: Cys469–Cys503, Cys476–Cys496, and Cys485–Cys500. Residues 469 to 503 (CEDKNLFCSYWAKIGECNSESKFMKIFCKASCGKC) form the ShKT 2 domain.

Requires Zn(2+) as cofactor. In terms of tissue distribution, expressed in pharyngeal muscles and mc cells.

The protein resides in the secreted. In terms of biological role, metalloprotease. This chain is Zinc metalloproteinase nas-14 (nas-14), found in Caenorhabditis elegans.